Reading from the N-terminus, the 240-residue chain is MTGKPAYKRVLLKASGEALMGSQGFGIDVSVADRIANDIKQARALGVEVGVVIGGGNIFRGVAVASKGGDRVTGDHMGMLATVINSLALRTSLHKIGVDSVVLSAIAMPEICESFSQRQATAYMDEGKVVIFAGGTGNPFFTTDSAAALRAAEIEADALLKGTQVDGIYSADPKKDPGATRFDQLTHKEFLDRGLAVMDTAAVALARENNIPIIVYSIHENGGLADILQGKGRCTIVSDN.

13-16 (KASG) contacts ATP. An involved in allosteric activation by GTP region spans residues 21–26 (GSQGFG). Gly-55 is a UMP binding site. ATP is bound by residues Gly-56 and Arg-60. UMP-binding positions include Asp-75 and 136 to 143 (TGNPFFTT). 4 residues coordinate ATP: Thr-163, Gln-164, Tyr-169, and Asp-172.

Belongs to the UMP kinase family. Homohexamer.

Its subcellular location is the cytoplasm. The catalysed reaction is UMP + ATP = UDP + ADP. It participates in pyrimidine metabolism; CTP biosynthesis via de novo pathway; UDP from UMP (UMPK route): step 1/1. With respect to regulation, allosterically activated by GTP. Inhibited by UTP. In terms of biological role, catalyzes the reversible phosphorylation of UMP to UDP. The chain is Uridylate kinase from Brucella suis biovar 1 (strain 1330).